A 925-amino-acid polypeptide reads, in one-letter code: Proto-oncogene DBL (925 aa).

The CRAL-TRIO domain maps to 1–88; the sequence is MAEANPRRGK…ELGGTLQYCH (88 aa). The stretch at 221–322 is one Spectrin repeat; sequence WKFEQDFQQL…EIKAKRIQLS (102 aa). Residues 495 to 675 form the DH domain; sequence LKNHVLNELI…LDLLKSVNDS (181 aa). In terms of domain architecture, PH spans 687–809; the sequence is NLNELGKMIM…WLKEIRNILL (123 aa).

It belongs to the MCF2 family. As to quaternary structure, interacts with an array of inositol phospholipids such as phosphatidylinositol 3-phosphate (PI3P), phosphatidylinositol 4-phosphate (PI4P) and phosphatidylinositol 5-phosphate (PI5P). May interact with CCPG1. In terms of processing, phosphorylation by TNK2 enhances guanine nucleotide exchange factor (GEF) activity toward Rho family proteins. In terms of tissue distribution, isoform 1 is expressed only in brain. Isoform 3 is expressed in heart, kidney, spleen, liver and testis. Isoform 4 is expressed in brain, heart, kidney, testis, placenta, stomach and peripheral blood. The protein is detectable in brain, heart, kidney, intestine, muscle, lung and testis.

The protein resides in the cytoplasm. It is found in the membrane. Guanine nucleotide exchange factor (GEF) that modulates the Rho family of GTPases. Promotes the conversion of some member of the Rho family GTPase from the GDP-bound to the GTP-bound form. Isoform 1 exhibits no activity toward RHOA, RAC1 or CDC42. Isoform 2 exhibits decreased GEF activity toward CDC42. Isoform 3 exhibits a weak but significant activity toward RAC1 and CDC42. Isoform 4 exhibits significant activity toward RHOA and CDC42. The truncated DBL oncogene is active toward RHOA, RAC1 and CDC42. The chain is Proto-oncogene DBL (MCF2) from Homo sapiens (Human).